The following is a 1060-amino-acid chain: FACT complex subunit SPT16 (1060 aa).

Residues 458 to 490 form a disordered region; the sequence is FNDDNETQKENNNNNNKRPGLSQTSNTTALKLE. Polar residues predominate over residues 478–490; sequence LSQTSNTTALKLE. Residues 508–532 adopt a coiled-coil conformation; sequence NADDANSEKLRQEIQIKLHEKRLQE. The tract at residues 977–1060 is disordered; the sequence is QGESDEEEES…AKADRNSGFD (84 aa). 2 stretches are compositionally biased toward acidic residues: residues 979-990 and 997-1044; these read ESDEEEESDEES and EDPQ…EDWD. The segment covering 1045–1060 has biased composition (basic and acidic residues); sequence ALERKAAKADRNSGFD.

The protein belongs to the peptidase M24 family. SPT16 subfamily. As to quaternary structure, forms a stable heterodimer with POB3. The SPT16-POB3 dimer weakly associates with multiple molecules of NHP6 to form the FACT complex.

The protein localises to the nucleus. It localises to the chromosome. In terms of biological role, component of the FACT complex, a general chromatin factor that acts to reorganize nucleosomes. The FACT complex is involved in multiple processes that require DNA as a template such as mRNA elongation, DNA replication and DNA repair. During transcription elongation the FACT complex acts as a histone chaperone that both destabilizes and restores nucleosomal structure. It facilitates the passage of RNA polymerase II and transcription by promoting the dissociation of one histone H2A-H2B dimer from the nucleosome, then subsequently promotes the reestablishment of the nucleosome following the passage of RNA polymerase II. This chain is FACT complex subunit SPT16 (CDC68), found in Candida albicans (strain SC5314 / ATCC MYA-2876) (Yeast).